A 354-amino-acid polypeptide reads, in one-letter code: Uroporphyrinogen decarboxylase (354 aa).

Substrate contacts are provided by residues 27–31, Asp-77, Tyr-153, Thr-208, and His-326; that span reads RQAGR.

The protein belongs to the uroporphyrinogen decarboxylase family. As to quaternary structure, homodimer.

The protein localises to the cytoplasm. It catalyses the reaction uroporphyrinogen III + 4 H(+) = coproporphyrinogen III + 4 CO2. It participates in porphyrin-containing compound metabolism; protoporphyrin-IX biosynthesis; coproporphyrinogen-III from 5-aminolevulinate: step 4/4. In terms of biological role, catalyzes the decarboxylation of four acetate groups of uroporphyrinogen-III to yield coproporphyrinogen-III. This is Uroporphyrinogen decarboxylase from Neisseria meningitidis serogroup C (strain 053442).